The following is a 290-amino-acid chain: 4-hydroxybenzoate octaprenyltransferase (290 aa).

Transmembrane regions (helical) follow at residues 41–61 (WPLVAIFALGTLLMRSAGCAM), 89–109 (WEAVAIAAVLSFVAFLLILPL), 133–153 (FFAIPQAYLGIAFGFGIPMAF), 158–178 (GTVPALAWVMLVANVFWSVAY), 202–224 (FGRFDVAAIMLCYAVTLGIYAWI), and 269–289 (WLGGVLFAGIAAHYLVAGAAG).

It belongs to the UbiA prenyltransferase family. Mg(2+) serves as cofactor.

The protein localises to the cell inner membrane. It catalyses the reaction all-trans-octaprenyl diphosphate + 4-hydroxybenzoate = 4-hydroxy-3-(all-trans-octaprenyl)benzoate + diphosphate. Its pathway is cofactor biosynthesis; ubiquinone biosynthesis. In terms of biological role, catalyzes the prenylation of para-hydroxybenzoate (PHB) with an all-trans polyprenyl group. Mediates the second step in the final reaction sequence of ubiquinone-8 (UQ-8) biosynthesis, which is the condensation of the polyisoprenoid side chain with PHB, generating the first membrane-bound Q intermediate 3-octaprenyl-4-hydroxybenzoate. This chain is 4-hydroxybenzoate octaprenyltransferase, found in Burkholderia vietnamiensis (strain G4 / LMG 22486) (Burkholderia cepacia (strain R1808)).